The sequence spans 157 residues: Snaclec 3 (157 aa).

The signal sequence occupies residues 1 to 23 (MGRLIFLSFGWLVVFLSLSGTGA). 3 disulfide bridges follow: cysteine 27/cysteine 38, cysteine 55/cysteine 153, and cysteine 128/cysteine 145. The C-type lectin domain maps to 34–154 (YGQHCYRAFS…CAGHYPFICK (121 aa)).

The protein belongs to the snaclec family. Heterodimer; disulfide-linked. In terms of tissue distribution, expressed by the venom gland.

Its subcellular location is the secreted. Functionally, interferes with one step of hemostasis (modulation of platelet aggregation, or coagulation cascade, for example). This is Snaclec 3 from Bitis gabonica (Gaboon adder).